Consider the following 156-residue polypeptide: Peroxisome assembly protein 22 (156 aa).

The chain crosses the membrane as a helical span at residues 24–46; it reads LSIIAVGVLSTVAVTVGYLLYLY.

The protein belongs to the peroxin-22 family.

It is found in the peroxisome membrane. Its function is as follows. Involved in peroxisome biogenesis. The polypeptide is Peroxisome assembly protein 22 (PEX22) (Kluyveromyces lactis (strain ATCC 8585 / CBS 2359 / DSM 70799 / NBRC 1267 / NRRL Y-1140 / WM37) (Yeast)).